Consider the following 99-residue polypeptide: Class II hydrophobin 1 (99 aa).

The N-terminal stretch at 1-26 (MKFIAVVAALTASLAMAAPTESSTDT) is a signal peptide. Intrachain disulfides connect cysteine 31–cysteine 80, cysteine 41–cysteine 71, cysteine 42–cysteine 54, and cysteine 81–cysteine 92.

Belongs to the cerato-ulmin hydrophobin family. Homotetramer. Further self-assembles to form highly ordered films at water-air interfaces through intermolecular interactions.

It localises to the secreted. The protein resides in the cell wall. Its function is as follows. Aerial growth, conidiation, and dispersal of filamentous fungi in the environment rely upon a capability of their secreting small amphipathic proteins called hydrophobins (HPBs) with low sequence identity. Class I can self-assemble into an outermost layer of rodlet bundles on aerial cell surfaces, conferring cellular hydrophobicity that supports fungal growth, development and dispersal; whereas Class II form highly ordered films at water-air interfaces through intermolecular interactions but contribute nothing to the rodlet structure. HFB1 is a class II hydrophobin that shows antifungal activity against pathogenic and opportunistic fungi such as Cryptococcus neoformans, Nakaseomyces glabrataa, or Candida tropicalis. This is Class II hydrophobin 1 from Sodiomyces alkalinus (strain CBS 110278 / VKM F-3762 / F11) (Alkaliphilic filamentous fungus).